A 706-amino-acid polypeptide reads, in one-letter code: Protein-glutamine gamma-glutamyltransferase 6 (706 aa).

Positions 223, 226, and 228 each coordinate Ca(2+). Cys274 is an active-site residue. Ca(2+) contacts are provided by Asp303, Asp305, Asn307, Ser309, and Asp327. Catalysis depends on residues His333 and Asp356. 4 residues coordinate Ca(2+): Asn396, Thr417, Glu445, and Glu450.

Belongs to the transglutaminase superfamily. Transglutaminase family. Requires Ca(2+) as cofactor.

It localises to the cytoplasm. The enzyme catalyses L-glutaminyl-[protein] + L-lysyl-[protein] = [protein]-L-lysyl-N(6)-5-L-glutamyl-[protein] + NH4(+). Functionally, catalyzes the cross-linking of proteins and the conjugation of polyamines to proteins. This chain is Protein-glutamine gamma-glutamyltransferase 6 (TGM6), found in Homo sapiens (Human).